Consider the following 185-residue polypeptide: C-phycoerythrin beta chain (185 aa).

Residues C49 and C60 each contribute to the (2R,3E)-phycoerythrobilin site. N71 carries the N4-methylasparagine modification. (2R,3E)-phycoerythrobilin contacts are provided by C81 and C166.

The protein belongs to the phycobiliprotein family. As to quaternary structure, heterodimer of an alpha and a beta chain. Post-translationally, contains three covalently linked bilin chromophores.

The protein localises to the cellular thylakoid membrane. Functionally, light-harvesting photosynthetic bile pigment-protein from the phycobiliprotein complex. In Pseudanabaena tenuis (strain PCC 7409), this protein is C-phycoerythrin beta chain (cpeB).